The chain runs to 479 residues: Neuronal acetylcholine receptor subunit alpha-9 (479 aa).

Positions Met1 to Thr25 are cleaved as a signal peptide. Over Ala26–Ser237 the chain is Extracellular. Residue Asn57 is glycosylated (N-linked (GlcNAc...) asparagine). Cysteines 155 and 169 form a disulfide. Residue Asn170 is glycosylated (N-linked (GlcNAc...) asparagine). Na(+) is bound by residues Ser191 and Asp193. Cysteines 219 and 220 form a disulfide. The next 3 membrane-spanning stretches (helical) occupy residues Ser238–Pro262, Val269–Ala287, and Tyr302–Ile323. The Cytoplasmic portion of the chain corresponds to His324–Arg457. Residues Phe458–Ala476 traverse the membrane as a helical segment.

This sequence belongs to the ligand-gated ion channel (TC 1.A.9) family. Acetylcholine receptor (TC 1.A.9.1) subfamily. Alpha-9/CHRNA9 sub-subfamily. As to quaternary structure, forms homo- or heterooligomeric channels in conjunction with CHRNA10. The native outer hair cell receptor may be composed of CHRNA9:CHRNA10 heterooligomers. Found in the stoichiometric form (CHRNA9)2:(CHRNA10)3. Detected in the nasal epithelium, in the outer hair cells of the cochlea, in the pars tuberalis of the hypophysis, and in the developing muscle of the tongue. Also expressed in the neurons of dorsal root ganglia.

It localises to the synaptic cell membrane. Its subcellular location is the cell membrane. The catalysed reaction is Ca(2+)(in) = Ca(2+)(out). It carries out the reaction Mg(2+)(in) = Mg(2+)(out). It catalyses the reaction K(+)(in) = K(+)(out). The enzyme catalyses Na(+)(in) = Na(+)(out). With respect to regulation, activated by a myriad of ligands such as acetylcholine. AChR activity is inhibited by the antagonist alpha-conotoxins RgIA and GeXXA, small disulfide-constrained peptides from cone snails. Component of neuronal acetylcholine receptors (nAChRs) that function as pentameric, ligand-gated cation channels with high calcium permeability among other activities. nAChRs are excitatory neurotrasnmitter receptors formed by a collection of nAChR subunits known to mediate synaptic transmission in the nervous system and the neuromuscular junction. Each nAchR subunit confers differential attributes to channel properties, including activation, deactivation and desensitization kinetics, pH sensitivity, cation permeability, and binding to allosteric modulators. Forms either homopentamers or heteropentamers with CHRNA10. Expressed in the inner ear, in sympathetic neurons and in other non-neuronal cells, such as skin keratinocytes and lymphocytes. nAChR formed by CHRNA9:CHRNA10 mediate central nervous system control of auditory and vestibular sensory processing. The channel is permeable to a range of divalent cations including calcium, the influx of which may activate a potassium current which hyperpolarizes the cell membrane. In the ear, mediates synaptic transmission between efferent olivocochlear fibers and hair cells of the cochlea, this may lead to a reduction in basilar membrane motion, altering the activity of auditory nerve fibers and reducing the range of dynamic hearing. This may protect against acoustic trauma. May also regulate keratinocyte adhesion. In Rattus norvegicus (Rat), this protein is Neuronal acetylcholine receptor subunit alpha-9 (Chrna9).